The sequence spans 33 residues: Zinc metalloproteinase-disintegrin-like moojenin (33 aa).

In terms of domain architecture, Disintegrin spans 8-33; the sequence is PPVCGNELLEVGEECDCGTPENCQNE. Ca(2+) is bound by residues V10, N13, L15, E17, E20, and D23. 2 cysteine pairs are disulfide-bonded: C11/C30 and C24/C30.

Belongs to the venom metalloproteinase (M12B) family. P-III subfamily. P-IIIb sub-subfamily. In terms of assembly, monomer. Requires Zn(2+) as cofactor. The N-terminus (from the N-terminal region of the metalloproteinase domain) is blocked. As to expression, expressed by the venom gland.

Its subcellular location is the secreted. The fibrinogenolytic and coagulant activities of the moojenin were abolished by preincubation with EDTA, 1,10-phenanthroline and beta-mercaptoethanol. Its function is as follows. Metalloproteinase moojenin: snake venom metalloproteinase that cleaves both alpha- and beta-chains of fibrinogen, but not the gamma-chain. Shows a coagulant activity on bovine plasma about 3.1 fold lower than crude venom. Renders the blood incoagulable when intraperitoneally administered into mice. Induces necrosis in liver and muscle, but does not cause histological alterations in mouse lungs, kidney or heart. This is Zinc metalloproteinase-disintegrin-like moojenin from Bothrops moojeni (Lance-headed viper).